We begin with the raw amino-acid sequence, 192 residues long: Putative metal-sulfur cluster biosynthesis proteins YuaD (192 aa).

The MOSC domain occupies Ala-15 to His-179.

This is Putative metal-sulfur cluster biosynthesis proteins YuaD (yuaD) from Bacillus subtilis (strain 168).